A 936-amino-acid polypeptide reads, in one-letter code: Isoleucine--tRNA ligase (936 aa).

The 'HIGH' region signature appears at 58–68 (PYANGRAHLGT). Residue Glu-561 coordinates L-isoleucyl-5'-AMP. The 'KMSKS' region motif lies at 602–606 (KMSKS). Lys-605 contacts ATP. Zn(2+) contacts are provided by Cys-899, Cys-902, Cys-919, and Cys-922.

This sequence belongs to the class-I aminoacyl-tRNA synthetase family. IleS type 1 subfamily. In terms of assembly, monomer. It depends on Zn(2+) as a cofactor.

The protein localises to the cytoplasm. The enzyme catalyses tRNA(Ile) + L-isoleucine + ATP = L-isoleucyl-tRNA(Ile) + AMP + diphosphate. Its function is as follows. Catalyzes the attachment of isoleucine to tRNA(Ile). As IleRS can inadvertently accommodate and process structurally similar amino acids such as valine, to avoid such errors it has two additional distinct tRNA(Ile)-dependent editing activities. One activity is designated as 'pretransfer' editing and involves the hydrolysis of activated Val-AMP. The other activity is designated 'posttransfer' editing and involves deacylation of mischarged Val-tRNA(Ile). The protein is Isoleucine--tRNA ligase of Coxiella burnetii (strain CbuK_Q154) (Coxiella burnetii (strain Q154)).